The sequence spans 136 residues: Sec-independent protein translocase protein TatB (136 aa).

The chain crosses the membrane as a helical span at residues 2–22; the sequence is FGSVGWGELLVLLIVGLVVLG. Residues 107–136 are disordered; it reads VTEPAPTPIVNPELAKPAEPGPTRYDADAT.

It belongs to the TatB family. The Tat system comprises two distinct complexes: a TatABC complex, containing multiple copies of TatA, TatB and TatC subunits, and a separate TatA complex, containing only TatA subunits. Substrates initially bind to the TatABC complex, which probably triggers association of the separate TatA complex to form the active translocon.

Its subcellular location is the cell membrane. In terms of biological role, part of the twin-arginine translocation (Tat) system that transports large folded proteins containing a characteristic twin-arginine motif in their signal peptide across membranes. Together with TatC, TatB is part of a receptor directly interacting with Tat signal peptides. TatB may form an oligomeric binding site that transiently accommodates folded Tat precursor proteins before their translocation. The sequence is that of Sec-independent protein translocase protein TatB from Mycobacteroides abscessus (strain ATCC 19977 / DSM 44196 / CCUG 20993 / CIP 104536 / JCM 13569 / NCTC 13031 / TMC 1543 / L948) (Mycobacterium abscessus).